We begin with the raw amino-acid sequence, 204 residues long: NADH-quinone oxidoreductase subunit C (204 aa).

Belongs to the complex I 30 kDa subunit family. NDH-1 is composed of 14 different subunits. Subunits NuoB, C, D, E, F, and G constitute the peripheral sector of the complex.

It is found in the cell inner membrane. It carries out the reaction a quinone + NADH + 5 H(+)(in) = a quinol + NAD(+) + 4 H(+)(out). Its function is as follows. NDH-1 shuttles electrons from NADH, via FMN and iron-sulfur (Fe-S) centers, to quinones in the respiratory chain. The immediate electron acceptor for the enzyme in this species is believed to be ubiquinone. Couples the redox reaction to proton translocation (for every two electrons transferred, four hydrogen ions are translocated across the cytoplasmic membrane), and thus conserves the redox energy in a proton gradient. The sequence is that of NADH-quinone oxidoreductase subunit C from Polaromonas naphthalenivorans (strain CJ2).